We begin with the raw amino-acid sequence, 329 residues long: COP9 signalosome complex subunit 6 (329 aa).

In terms of domain architecture, MPN spans 44–175 (TRVKAQAACS…VTIYESELHV (132 aa)).

Belongs to the peptidase M67A family. CSN6 subfamily. As to quaternary structure, component of the CSN complex, probably composed of CSN1, CSN2, CSN3, CSN4, CSN5, CSN6, CSN7 and CSN8.

In terms of biological role, component of the COP9 signalosome complex (CSN), a complex involved in various cellular and developmental processes such as photomorphogenesis and response to hormones. The CSN complex is an essential regulator of the ubiquitin (Ubl) conjugation pathway by mediating the deneddylation of the cullin subunits of SCF-type E3 ligase complexes, leading to decrease the Ubl ligase activity of SCF. Involved in early response to iron deficiency. This Oryza sativa subsp. japonica (Rice) protein is COP9 signalosome complex subunit 6.